A 459-amino-acid chain; its full sequence is Putrescine aminotransferase (459 aa).

Pyridoxal 5'-phosphate contacts are provided by residues G150 to T151 and Q274. K300 carries the N6-(pyridoxal phosphate)lysine modification. Pyridoxal 5'-phosphate is bound at residue T332.

It belongs to the class-III pyridoxal-phosphate-dependent aminotransferase family. Putrescine aminotransferase subfamily. Requires pyridoxal 5'-phosphate as cofactor.

The enzyme catalyses an alkane-alpha,omega-diamine + 2-oxoglutarate = an omega-aminoaldehyde + L-glutamate. The catalysed reaction is putrescine + 2-oxoglutarate = 1-pyrroline + L-glutamate + H2O. It carries out the reaction cadaverine + 2-oxoglutarate = 5-aminopentanal + L-glutamate. Its pathway is amine and polyamine degradation; putrescine degradation; 4-aminobutanal from putrescine (transaminase route): step 1/1. In terms of biological role, catalyzes the aminotransferase reaction from putrescine to 2-oxoglutarate, leading to glutamate and 4-aminobutanal, which spontaneously cyclizes to form 1-pyrroline. This is the first step in one of two pathways for putrescine degradation, where putrescine is converted into 4-aminobutanoate (gamma-aminobutyrate or GABA) via 4-aminobutanal. Also functions as a cadaverine transaminase in a a L-lysine degradation pathway to succinate that proceeds via cadaverine, glutarate and L-2-hydroxyglutarate. The sequence is that of Putrescine aminotransferase from Escherichia coli O17:K52:H18 (strain UMN026 / ExPEC).